The following is a 1237-amino-acid chain: Phosphorylase b kinase regulatory subunit alpha, skeletal muscle isoform (1237 aa).

Serine 629, serine 729, serine 735, and serine 758 each carry phosphoserine. Residues 810–840 are calmodulin-binding; the sequence is LTELYGKVGKIRHWGLIRYISGILRKKVEAL. A Phosphoserine; by autocatalysis modification is found at serine 972. Position 981 is a phosphoserine (serine 981). Residues serine 985 and serine 1007 each carry the phosphoserine; by autocatalysis modification. Phosphoserine; by PKA is present on serine 1018. Phosphoserine is present on residues serine 1020, serine 1023, and serine 1030. The disordered stretch occupies residues 1021–1069; sequence TESQPNGGHSLGADLMSPSFLSPGTSVTPSSGSFPGHHTSKDSRQGQWQ. Residues 1042–1056 are compositionally biased toward low complexity; that stretch reads SPGTSVTPSSGSFPG. The tract at residues 1060–1100 is calmodulin-binding; the sequence is SKDSRQGQWQRRRRLDGALNRVPIGFYQKVWKVLQKCHGLS. The residue at position 1127 (serine 1127) is a Phosphoserine. Residue cysteine 1234 is the site of S-farnesyl cysteine attachment.

The protein belongs to the phosphorylase b kinase regulatory chain family. Hexadecamer of 4 heterotetramers, each composed of alpha, beta, gamma, and delta subunits. Alpha (PHKA1 or PHKA2) and beta (PHKB) are regulatory subunits, gamma (PHKG1 or PHKG2) is the catalytic subunit, and delta is calmodulin. Phosphorylation of Ser-1018 by PKA stimulates the dephosphorylation of the beta subunit and, thus, reverses the initial stimulation of PHK by the faster beta-subunit phosphorylation by PKA, that occurs in muscle in response to adrenaline. In terms of processing, cys-1234 is farnesylated, but the C-terminal tripeptide is not removed and the cysteine carboxyl is not methylated. Isoform 1 predominates in muscle, heart, brain and testis. Isoforms 1 and 2 are expressed in similar quantities in the other tissues. Isoform 3 is highly expressed in slow muscle and heart.

The protein localises to the cell membrane. The protein operates within glycan biosynthesis; glycogen metabolism. By phosphorylation of various serine residues and by calcium. Its function is as follows. Phosphorylase b kinase catalyzes the phosphorylation of serine in certain substrates, including troponin I. The alpha chain may bind calmodulin. In Oryctolagus cuniculus (Rabbit), this protein is Phosphorylase b kinase regulatory subunit alpha, skeletal muscle isoform (PHKA1).